The following is an 833-amino-acid chain: MutS protein homolog 5 (833 aa).

Positions 1–45 (MAFRATPGRTPPGPGPRSGIPSASFPSPQPPMAGPGGIEEEDEEE) are disordered. Residue 591 to 598 (GPNSSGKS) participates in ATP binding.

It belongs to the DNA mismatch repair MutS family. In terms of assembly, heterooligomer of MSH4 and MSH5. Interacts with HJURP. Interacts with REDIC1.

Functionally, involved in DNA mismatch repair and meiotic recombination processes. Facilitates crossovers between homologs during meiosis. This is MutS protein homolog 5 (Msh5) from Mus musculus (Mouse).